The primary structure comprises 357 residues: Phosphoribosylformylglycinamidine cyclo-ligase (357 aa).

The protein belongs to the AIR synthase family.

Its subcellular location is the cytoplasm. It carries out the reaction 2-formamido-N(1)-(5-O-phospho-beta-D-ribosyl)acetamidine + ATP = 5-amino-1-(5-phospho-beta-D-ribosyl)imidazole + ADP + phosphate + H(+). It participates in purine metabolism; IMP biosynthesis via de novo pathway; 5-amino-1-(5-phospho-D-ribosyl)imidazole from N(2)-formyl-N(1)-(5-phospho-D-ribosyl)glycinamide: step 2/2. This chain is Phosphoribosylformylglycinamidine cyclo-ligase, found in Rhizobium etli (strain CIAT 652).